A 100-amino-acid polypeptide reads, in one-letter code: Urease subunit gamma (100 aa).

It belongs to the urease gamma subunit family. In terms of assembly, heterotrimer of UreA (gamma), UreB (beta) and UreC (alpha) subunits. Three heterotrimers associate to form the active enzyme.

Its subcellular location is the cytoplasm. It carries out the reaction urea + 2 H2O + H(+) = hydrogencarbonate + 2 NH4(+). It participates in nitrogen metabolism; urea degradation; CO(2) and NH(3) from urea (urease route): step 1/1. This Synechococcus sp. (strain CC9902) protein is Urease subunit gamma.